Here is a 252-residue protein sequence, read N- to C-terminus: GTP cyclohydrolase 1 type 2 homolog (252 aa).

A divalent metal cation contacts are provided by His63, His64, Asp101, His220, and Glu224.

It belongs to the GTP cyclohydrolase I type 2/NIF3 family. In terms of assembly, homohexamer.

The protein is GTP cyclohydrolase 1 type 2 homolog of Vibrio cholerae serotype O1 (strain ATCC 39315 / El Tor Inaba N16961).